The sequence spans 273 residues: GDNF family receptor alpha-4 (273 aa).

The N-linked (GlcNAc...) asparagine glycan is linked to Asn192. Asn250 carries the GPI-anchor amidated asparagine lipid modification. The propeptide at Ala251–Leu273 is removed in mature form.

It belongs to the GDNFR family. Interacts with ARTN ligand and RET: forms a 2:2:2 ternary complex composed of ARTN ligand, GFRA3 and RET receptor. Interacts with SORL1. As to expression, weakly expressed in heart, brain and testis.

The protein localises to the cell membrane. It localises to the secreted. Receptor for persephin (PSPN), a growth factor that exhibits neurotrophic activity on mesencephalic dopaminergic and motor neurons. Acts by binding to its coreceptor, GFRA4, leading to autophosphorylation and activation of the RET receptor. May be important in C-cell development and, in the postnatal development of the adrenal medulla. This chain is GDNF family receptor alpha-4 (Gfra4), found in Rattus norvegicus (Rat).